Here is an 853-residue protein sequence, read N- to C-terminus: DNA mismatch repair protein MutS (853 aa).

ATP is bound at residue G613–S620.

It belongs to the DNA mismatch repair MutS family.

In terms of biological role, this protein is involved in the repair of mismatches in DNA. It is possible that it carries out the mismatch recognition step. This protein has a weak ATPase activity. This Vibrio vulnificus (strain YJ016) protein is DNA mismatch repair protein MutS.